The chain runs to 5495 residues: Microtubule-associated protein futsch (5495 aa).

20 disordered regions span residues 1–97, 656–975, 988–1074, 1086–1111, 1128–1167, 1185–1204, 1255–1275, 1306–1358, 1402–1840, 1866–2631, 2709–2810, 2830–4166, 4196–4230, 4362–4612, 4636–4668, 4687–4975, 5035–5065, 5101–5138, 5170–5199, and 5328–5350; these read MGDQ…DADG, AKAD…LKEE, RDEM…AEEE, ERKARLEGASARQDESELDVEPEQSK, KSRTEEQLAKPAEEELSSPTPEEKLSKKTSDTKDDQIGAP, SATIESGATTAPTLPEDERI, KDAPKDANAEALGELPDSGER, HEEA…EPNK, NQED…VVES, EIGK…PGFV, AKTV…KDFA, LPTL…DLSL, KAESSPRPAVLSKPAEFSQPDTGHTASTPVDEASP, IIPD…ASQL, AQKSNKEIKDARETKVTSQFTTTTSSATKDDSL, AFST…QMLA, KTVTTTDSSEPDSEKVVVTTTRTTSESERDQ, SYELQHSSSGVSKRSDLDADGDESQDDIPPQYGSEEHS, PSTEPIPIQGAPSGDSQSSESVESSSQTWA, and GLPSPAPLPVEGGADIRTTPKKE. Low complexity predominate over residues 35–48; the sequence is AKGAGDGPAQDAAQ. 3 stretches are compositionally biased toward basic and acidic residues: residues 656-672, 696-716, and 758-795; these read AKADSMDTDAEPEHEAD, EPEHEPEAEQDKDVGEEKKVE, and GKADKPRAEVKPVVRSRIDTKPPKSMDRKLAKRDEKKS. 2 stretches are compositionally biased toward low complexity: residues 797–806 and 819–831; these read PTTTPAARAP and PATKSSPSSTPAK. The span at 832 to 843 shows a compositional bias: basic and acidic residues; the sequence is SAKEANNRKVLE. Residues 850–888 are compositionally biased toward low complexity; the sequence is RVQATSTVSRRVTSTASERRVQQQAEAKTAATGATQATQ. The segment covering 918-931 has biased composition (basic and acidic residues); it reads KAADLKKTRLDKGG. Residues 932–942 are compositionally biased toward polar residues; sequence TTDSSLVSTPS. Basic and acidic residues-rich tracts occupy residues 962–975 and 988–1007; these read DAEKQRELDDLKEE and RDEMKRQQHQQIKAELREMP. Acidic residues predominate over residues 1012–1041; sequence GDGENEPDEEEEYLIIEKEEVEQYTEDSIV. The segment covering 1047–1065 has biased composition (basic and acidic residues); that stretch reads MTKEEEIQKHQRDSQESEK. Basic and acidic residues-rich tracts occupy residues 1128-1140 and 1148-1163; these read KSRTEEQLAKPAE and PEEKLSKKTSDTKDDQ. The span at 1187–1196 shows a compositional bias: polar residues; sequence TIESGATTAP. Composition is skewed to basic and acidic residues over residues 1306–1319, 1327–1337, 1343–1358, and 1408–1443; these read HEEADLGLYEKDSQ, SHKEESAKEEK, KENKVGEIELGDEPNK, and EQVKDKEEHEQKIESGIITEKEAKKSASTPEEKETS. A run of 2 repeats spans residues 1469 to 1502 and 1513 to 1539. The tract at residues 1469-4032 is 53 X approximate repeat; that stretch reads REDTGSIESP…SPLASKESSR (2564 aa). Composition is skewed to basic and acidic residues over residues 1546-1555, 1571-1663, 1679-1696, 1718-1732, and 1748-1779; these read PESEAKDKKS, SVKD…DEKS, SVKDETEKSKEPSRRESI, GIKDESAKPESRRDS, and SVKDEPIKSTEKSRRESVAESFKADSTKDEKS. A run of 17 repeats spans residues 1622 to 1649, 1660 to 1686, 1690 to 1718, 1755 to 1782, 1790 to 1818, 1837 to 1865, 1874 to 1902, 1911 to 1939, 1948 to 1976, 1985 to 2013, 2022 to 2050, 2059 to 2087, 2096 to 2124, 2133 to 2161, 2170 to 2198, 2215 to 2243, and 2262 to 2292. Over residues 1804–1815 the composition is skewed to polar residues; it reads ERSQPESVTASR. Composition is skewed to basic and acidic residues over residues 1887–1896, 1904–1942, 1960–1976, 1994–2007, 2041–2059, 2078–2096, 2115–2133, 2152–2170, 2189–2207, 2226–2244, 2263–2281, 2300–2318, 2337–2355, 2374–2391, 2419–2435, 2466–2482, 2560–2588, and 2604–2627; these read VKPESRRESS, HAEDSKEPSRPESKVECLKDESEVLKGSTRRESVAESDK, MKDESMSKEPSRRESVK, SAKDGADDLKELSR, SVKDEAEKSKEESRRESVA, SIKDEAEKSKEESRRESVA, SIKDEAEKSKEETRRESVA, SIKDEAEKSKEESRRESAA, SVKDEADKSKEESRRESM, SVKDDPVKSKEPSRRES, SVKDEAEKQESRRESKT, IKYDLDKPQIIKDDKSTEHSRRESLEDKS, and SDHEAAVAIEDDAKSSISPKDKSR. Copy 20 of the repeat occupies 2355–2391; the sequence is AEKSPLPSKEASRPASVAESVKDEADKSKEESRRESM. A run of 2 repeats spans residues 2703–2726 and 2761–2787. Residues 2764-2780 show a composition bias toward basic and acidic residues; that stretch reads ESKDDAAQLKSSVEDLR. Ser-2800 carries the phosphoserine; by GSK3-beta modification. Repeat copies occupy residues 2820 to 2846, 2864 to 2892, and 2907 to 2933. Low complexity predominate over residues 2845–2861; the sequence is PQTSTPTSSPTVASVQP. Composition is skewed to basic and acidic residues over residues 2889–2914 and 2942–2954; these read AEERPESPAESAKDAAESVEKSKDAS and GPKDDVEKSKESS. Residues 2955 to 2966 are compositionally biased toward polar residues; the sequence is RPPSVSASITGD. 28 tandem repeats follow at residues 2956–2987, 3006–3034, 3049–3075, 3089–3117, 3131–3158, 3200–3224, 3228–3256, 3265–3293, 3302–3330, 3339–3367, 3376–3404, 3413–3441, 3450–3478, 3487–3515, 3524–3552, 3561–3589, 3598–3626, 3635–3663, 3672–3700, 3709–3737, 3746–3774, 3783–3811, 3820–3848, 3867–3894, 3895–3921, 3931–3958, 3968–3995, and 4005–4032. Basic and acidic residues-rich tracts occupy residues 2980–2996, 3017–3051, 3061–3075, 3087–3116, 3156–3168, 3175–3208, and 3226–3248; these read SVKDEHDKAESRRESIA, SQKDEKSTLASKEASRRESVVESSKDDAEKSESRP, VPRESKSPLDSKDTS, EDEKSEQQSRRESVAESVKADTKKDGKSQE, PMDKADKSKEPSR, SIKHENTKDEESPLGSRRDSVAESIKSDITKGEK, and IKDEKAESRRESVAESVKPESSK. Residues Ser-3067, Ser-3071, and Ser-3075 each carry the phosphoserine modification. Positions 3300–3310 are enriched in basic and acidic residues; sequence SRPESEAESLK. The segment covering 3316 to 3327 has biased composition (polar residues); the sequence is SQETSRPESVTE. Composition is skewed to basic and acidic residues over residues 3350–3363, 3373–3399, 3419–3431, 3448–3465, 3484–3502, 3521–3539, 3558–3576, 3599–3613, 3632–3650, 3669–3687, 3710–3724, 3743–3761, 3780–3798, and 3817–3835; these read NAKDSADESKEQRP, SIKDEKSPLASKDEAEKSKEESRRESV, SVKDEAEKSKEES, VKDEAEKSKEESRRESVA, SVKDEADKSKEESRRESGA, SIKDEAEKSKEESRRESVA, SVKDEAEKSKEESRRDSVA, EAEKSKEESRRESVA, SVKDEAEKSKEESSRDSVA, SVKDDAEKSKEESRRESVA, and SVKDEAEKSKEESRRESVA. Residues 3836 to 3850 show a composition bias toward low complexity; sequence EKSSLASKKASRPAS. Basic and acidic residues-rich tracts occupy residues 3854 to 3872, 3891 to 3909, 3928 to 3946, 3965 to 3983, 4002 to 4020, 4039 to 4066, 4086 to 4095, and 4115 to 4141; these read SVKDEAEKSKEESRRESVA, SVKDEADKSKEESRRESGA, SVKDETEKSKEESRRESVT, SIKDEAEGTKQESRRESMPESGKAESIK, SVKDETEKPE, and AKDEKSPLHSRPESVADKSPDASKEAS. Polar residues-rich tracts occupy residues 4142–4152 and 4214–4223; these read RSLSVAETASS and QPDTGHTAST. 3 stretches are compositionally biased toward basic and acidic residues: residues 4362–4379, 4386–4410, and 4419–4432; these read IIPDFDERQLEEKLKSTA, DKSTRDEKSLEISVKVEIESEKSSP, and IEEKDKIEQSEKAQ. The segment covering 4443–4461 has biased composition (low complexity); the sequence is PESVASQPESVPSPSQSAA. A compositionally biased stretch (basic and acidic residues) spans 4462–4481; the sequence is SHEHKEVELSESHKAEKSSR. Residues 4498 to 4508 are compositionally biased toward polar residues; sequence RPASSTSQFST. Residues 4517–4528 are compositionally biased toward low complexity; sequence ESLLHSLTTTET. The span at 4529–4539 shows a compositional bias: basic and acidic residues; sequence VETKQMEEKSS. Positions 4540 to 4560 are enriched in low complexity; it reads FESVSTSVTKSTVLSSQSTVQ. Basic and acidic residues-rich tracts occupy residues 4575–4584 and 4639–4650; these read KVEDSSRRES and SNKEIKDARETK. 2 stretches are compositionally biased toward low complexity: residues 4651–4662 and 4703–4714; these read VTSQFTTTTSSA and TTASAVSSTSAS. The segment covering 4744–4754 has biased composition (acidic residues); sequence PEDEEPADDVD. Basic and acidic residues-rich tracts occupy residues 4755 to 4764 and 4788 to 4798; these read ERSSVKESRS and LVEEEHEHVEE. Positions 4804-4829 are enriched in low complexity; sequence TSTSKTTTLLQSSEQSSTTTSSTSKT. Positions 4835–4851 are enriched in polar residues; sequence ESITLTQMDQQTSQSQG. Residues 4875–4905 show a composition bias toward low complexity; that stretch reads GSAGSVIGAGAGAVAAGGKCESSAASIVSSS. The span at 4915–4930 shows a compositional bias: polar residues; it reads GKSSPGALTSESQSIP. Ser-4950 is subject to Phosphoserine; by GSK3-beta. Basic and acidic residues predominate over residues 4955 to 4970; the sequence is VSKDELKSLEMQHHSQ. The segment covering 5101–5112 has biased composition (polar residues); the sequence is SYELQHSSSGVS. Positions 5185–5196 are enriched in low complexity; it reads SQSSESVESSSQ.

Heterodimer of a heavy and a light chain. Interacts with Fmr1. Found in a complex with tubulin and Futsch. Several minor light chains can be created with markedly different pIs. In terms of processing, phosphorylated by SGG/GSK3. Phosphorylated by LRRK2 at the presynapse of neuromuscular junctions, which negatively regulates the activity controlling synaptic differentiation. Neuronal cells within the PNS and CNS.

The protein resides in the cytoplasm. It is found in the cytoskeleton. During embryogenesis, necessary for dendritic and axonal organization and growth at the neuromuscular junction through the regulation of the synaptic microtubule cytoskeleton. Microtubule hairpin loops are found within a small subset of synaptic boutons at the neuromuscular synapse, these loops are stabilized by futsch. Loop morphology and dynamics suggest that rearrangement of these microtubule-based loops is a critical component of the process of bouton division and for subsequent nerve-terminal growth and branching. Translation is repressed by Fmr1. Together with ringer, required for neuromuscular junction (NMJ) bouton growth by regulating synaptic microtubules. Function with ringer in maintaining microtubule stability and dynamics, is essential for promoting axon regeneration in response to peripheral (PNS) and central nervous system (CNS) injury. In response to axotomy, acts downstream of a stress response cascade involving Xbp1 splicing, to control axon regeneration. The polypeptide is Microtubule-associated protein futsch (futsch) (Drosophila melanogaster (Fruit fly)).